The sequence spans 198 residues: Na(+)-translocating NADH-quinone reductase subunit E (198 aa).

6 consecutive transmembrane segments (helical) span residues 11-31 (AVFIENMALAFFLGMCTFLAV), 39-59 (FGLGIAVTVVLGLSVPLNNLV), 77-97 (FLNFITFIGVIAALVQILEMI), 109-129 (LGIFLPLITVNCAIFGGVSFM), 140-160 (IVYGFGSGIGWMLAIVLLASI), and 176-196 (LGVTFVTTGLMALGFMSFSGV).

The protein belongs to the NqrDE/RnfAE family. In terms of assembly, composed of six subunits; NqrA, NqrB, NqrC, NqrD, NqrE and NqrF.

It is found in the cell inner membrane. It catalyses the reaction a ubiquinone + n Na(+)(in) + NADH + H(+) = a ubiquinol + n Na(+)(out) + NAD(+). Its function is as follows. NQR complex catalyzes the reduction of ubiquinone-1 to ubiquinol by two successive reactions, coupled with the transport of Na(+) ions from the cytoplasm to the periplasm. NqrA to NqrE are probably involved in the second step, the conversion of ubisemiquinone to ubiquinol. The protein is Na(+)-translocating NADH-quinone reductase subunit E of Proteus mirabilis (strain HI4320).